The following is a 286-amino-acid chain: 5-amino-6-(5-phospho-D-ribitylamino)uracil phosphatase YwtE (286 aa).

Asp-7 functions as the Nucleophile in the catalytic mechanism. Asp-7 provides a ligand contact to Mg(2+). Leu-8 contacts phosphate. Asp-9 contributes to the Mg(2+) binding site. Phosphate contacts are provided by residues 41–42 and Lys-210; that span reads TG. Residues Asp-233 and Ser-234 each contribute to the Mg(2+) site. Asn-236 contributes to the phosphate binding site.

Belongs to the HAD-like hydrolase superfamily. Cof family. Mg(2+) is required as a cofactor.

The enzyme catalyses 5-amino-6-(5-phospho-D-ribitylamino)uracil + H2O = 5-amino-6-(D-ribitylamino)uracil + phosphate. Its pathway is cofactor biosynthesis; riboflavin biosynthesis; 5-amino-6-(D-ribitylamino)uracil from GTP: step 4/4. In terms of biological role, catalyzes the dephosphorylation of the riboflavin precursor 5-amino-6-(5-phospho-D-ribitylamino)uracil and of flavin mononucleotide (FMN) in vitro. Also catalyzes the dephosphorylation of phosphorylated 5-6 carbon sugars and monophosphate nucleotides (NMP) in vitro. This Bacillus subtilis (strain 168) protein is 5-amino-6-(5-phospho-D-ribitylamino)uracil phosphatase YwtE (ywtE).